The chain runs to 1222 residues: Chitin synthase 4 (1222 aa).

The segment at 1–108 is disordered; it reads MSLPERPGGI…NRIDKDHPNY (108 aa). Residues 51-68 are compositionally biased toward polar residues; that stretch reads LSANSFAETIPSPNNSFV. A glycan (N-linked (GlcNAc...) asparagine) is linked at Asn-64. Over residues 94–107 the composition is skewed to basic and acidic residues; the sequence is IRPERNRIDKDHPN. N-linked (GlcNAc...) asparagine glycosylation occurs at Asn-116. The interval 136–199 is disordered; it reads TTDVSGSRSQ…KSTKKRSTPQ (64 aa). Over residues 137–154 the composition is skewed to polar residues; that stretch reads TDVSGSRSQTLDGVSDTS. Basic residues predominate over residues 176-196; the sequence is SAKRVSRHKSGKITKSTKKRS. Helical transmembrane passes span 204–224 and 242–262; these read PPSF…DFML and MGLI…TFGF. 2 N-linked (GlcNAc...) asparagine glycosylation sites follow: Asn-378 and Asn-418. The helical transmembrane segment at 509 to 529 threads the bilayer; it reads YVFLALILSVVGSRFVLALIF. The interval 595–662 is disordered; that stretch reads RFSTVYGPDR…PPSDGPGPAG (68 aa). Polar residues predominate over residues 608 to 643; the sequence is NKRVPTTMASSGGSGSQLLHPNSMYRQGNDSRSSFL. N-linked (GlcNAc...) asparagine glycosylation is found at Asn-636 and Asn-1031. A run of 3 helical transmembrane segments spans residues 1056–1076, 1090–1110, and 1116–1136; these read FIVF…AFTF, VIPL…IVIT, and YLVW…VLPV. Residues 1201-1222 form a disordered region; sequence GGGNSWSMPPGHQYHDDYYSDA. A compositionally biased stretch (basic and acidic residues) spans 1213 to 1222; that stretch reads QYHDDYYSDA.

It belongs to the chitin synthase family. Class IV subfamily.

It localises to the cell membrane. It catalyses the reaction [(1-&gt;4)-N-acetyl-beta-D-glucosaminyl](n) + UDP-N-acetyl-alpha-D-glucosamine = [(1-&gt;4)-N-acetyl-beta-D-glucosaminyl](n+1) + UDP + H(+). Polymerizes chitin, a structural polymer of the cell wall and septum, by transferring the sugar moiety of UDP-GlcNAc to the non-reducing end of the growing chitin polymer. Plays a role in cell wall integrity and is involved in tolerance to hyperosmotic conditions. Required to successfully penetrate the host plants and thus plays a key role in pathogenicity. The polypeptide is Chitin synthase 4 (Verticillium dahliae (strain VdLs.17 / ATCC MYA-4575 / FGSC 10137) (Verticillium wilt)).